The chain runs to 457 residues: D-inositol 3-phosphate glycosyltransferase (457 aa).

Histidine 34 provides a ligand contact to 1D-myo-inositol 3-phosphate. Residues 40-41 (QP) and glycine 48 contribute to the UDP-N-acetyl-alpha-D-glucosamine site. 1D-myo-inositol 3-phosphate is bound by residues 45–50 (DAGGMN), lysine 103, tyrosine 136, threonine 160, and arginine 180. Arginine 267, lysine 272, and valine 333 together coordinate UDP-N-acetyl-alpha-D-glucosamine. Phenylalanine 342, arginine 343, and alanine 345 together coordinate Mg(2+). UDP-N-acetyl-alpha-D-glucosamine is bound by residues glutamate 355 and glutamate 363. Threonine 369 is a Mg(2+) binding site.

This sequence belongs to the glycosyltransferase group 1 family. MshA subfamily. As to quaternary structure, homodimer.

The enzyme catalyses 1D-myo-inositol 3-phosphate + UDP-N-acetyl-alpha-D-glucosamine = 1D-myo-inositol 2-acetamido-2-deoxy-alpha-D-glucopyranoside 3-phosphate + UDP + H(+). In terms of biological role, catalyzes the transfer of a N-acetyl-glucosamine moiety to 1D-myo-inositol 3-phosphate to produce 1D-myo-inositol 2-acetamido-2-deoxy-glucopyranoside 3-phosphate in the mycothiol biosynthesis pathway. This chain is D-inositol 3-phosphate glycosyltransferase, found in Streptomyces coelicolor (strain ATCC BAA-471 / A3(2) / M145).